We begin with the raw amino-acid sequence, 392 residues long: Outer membrane protein assembly factor BamB (392 aa).

An N-terminal signal peptide occupies residues 1 to 19 (MQLRKLLLPGLLSVTLLSG). The N-palmitoyl cysteine moiety is linked to residue C20. C20 carries S-diacylglycerol cysteine lipidation.

Belongs to the BamB family. As to quaternary structure, part of the Bam complex, which is composed of the outer membrane protein BamA, and four lipoproteins BamB, BamC, BamD and BamE.

It localises to the cell outer membrane. Part of the outer membrane protein assembly complex, which is involved in assembly and insertion of beta-barrel proteins into the outer membrane. The sequence is that of Outer membrane protein assembly factor BamB from Salmonella typhimurium (strain LT2 / SGSC1412 / ATCC 700720).